The following is a 262-amino-acid chain: Iso-A82775C biosynthesis cluster protein B (262 aa).

Its function is as follows. Part of the gene cluster that mediates the biosynthesis of iso-A82775C, a enylepoxycyclohexane and biosynthetic precursor of the chloropestolide anticancer natural products. Within the cluster, the prenyltransferase iacE prenylates siccayne to generate pestalodiol E, using dimethylallyl diphosphate (DMAPP) as cosubstrate. The probable oxidoreductase iacF is then involved in the epoxidation of pestalodiol F to pestalodiol F, which is further converted to pestalofone A by the short-chain dehydrogenase/reductase iacG. Iso-A82775C is subsequently generated from pestalofone A by the short-chain dehydrogenase/reductase iacC. Iso-A82775C is further condensed with maldoxin via a Diels-Alder reaction to produce the anticancer natural products chloropestolides A to E. The polypeptide is Iso-A82775C biosynthesis cluster protein B (Pestalotiopsis fici (strain W106-1 / CGMCC3.15140)).